Here is a 119-residue protein sequence, read N- to C-terminus: Ig heavy chain V region T601 (119 aa).

Residues 1 to 112 (EVKLLESGGG…GYFDVWGAGT (112 aa)) form the Ig-like domain.

This is Ig heavy chain V region T601 from Mus musculus (Mouse).